A 413-amino-acid chain; its full sequence is L-cysteine:1D-myo-inositol 2-amino-2-deoxy-alpha-D-glucopyranoside ligase (413 aa).

A disordered region spans residues methionine 1–leucine 21. Residue cysteine 43 coordinates Zn(2+). L-cysteinyl-5'-AMP is bound by residues cysteine 43–threonine 46, threonine 58, and asparagine 81–threonine 83. Residues isoleucine 45–histidine 55 carry the 'HIGH' region motif. The 'ERGGDP' region motif lies at glutamate 187–proline 192. Residue tryptophan 227 coordinates L-cysteinyl-5'-AMP. A Zn(2+)-binding site is contributed by cysteine 231. An L-cysteinyl-5'-AMP-binding site is contributed by glycine 249–aspartate 251. Histidine 256 contacts Zn(2+). Isoleucine 283 is an L-cysteinyl-5'-AMP binding site. A 'KMSKS' region motif is present at residues lysine 289–serine 293.

The protein belongs to the class-I aminoacyl-tRNA synthetase family. MshC subfamily. Monomer. Zn(2+) serves as cofactor.

It catalyses the reaction 1D-myo-inositol 2-amino-2-deoxy-alpha-D-glucopyranoside + L-cysteine + ATP = 1D-myo-inositol 2-(L-cysteinylamino)-2-deoxy-alpha-D-glucopyranoside + AMP + diphosphate + H(+). Functionally, catalyzes the ATP-dependent condensation of GlcN-Ins and L-cysteine to form L-Cys-GlcN-Ins. The sequence is that of L-cysteine:1D-myo-inositol 2-amino-2-deoxy-alpha-D-glucopyranoside ligase from Rhodococcus erythropolis (strain PR4 / NBRC 100887).